Here is an 869-residue protein sequence, read N- to C-terminus: Bifunctional uridylyltransferase/uridylyl-removing enzyme (869 aa).

The uridylyltransferase stretch occupies residues 1–332 (MTDTPAERPD…QFDGEATPEP (332 aa)). Residues 333-691 (LGGGFSLRRG…RRAVPDNDAL (359 aa)) form a uridylyl-removing region. The HD domain maps to 450 to 572 (VDQHTLMVLR…VGTRERLDYL (123 aa)). ACT domains lie at 692 to 774 (EVFV…RAVP) and 798 to 869 (RISL…LDPV).

Belongs to the GlnD family. The cofactor is Mg(2+).

The enzyme catalyses [protein-PII]-L-tyrosine + UTP = [protein-PII]-uridylyl-L-tyrosine + diphosphate. It catalyses the reaction [protein-PII]-uridylyl-L-tyrosine + H2O = [protein-PII]-L-tyrosine + UMP + H(+). Uridylyltransferase (UTase) activity is inhibited by glutamine, while glutamine activates uridylyl-removing (UR) activity. Modifies, by uridylylation and deuridylylation, the PII regulatory proteins (GlnB and homologs), in response to the nitrogen status of the cell that GlnD senses through the glutamine level. Under low glutamine levels, catalyzes the conversion of the PII proteins and UTP to PII-UMP and PPi, while under higher glutamine levels, GlnD hydrolyzes PII-UMP to PII and UMP (deuridylylation). Thus, controls uridylylation state and activity of the PII proteins, and plays an important role in the regulation of nitrogen assimilation and metabolism. This is Bifunctional uridylyltransferase/uridylyl-removing enzyme from Xanthomonas euvesicatoria pv. vesicatoria (strain 85-10) (Xanthomonas campestris pv. vesicatoria).